A 413-amino-acid chain; its full sequence is Phosphopentomutase (413 aa).

Residues aspartate 11, aspartate 306, histidine 311, aspartate 347, histidine 348, and histidine 359 each coordinate Mn(2+).

It belongs to the phosphopentomutase family. It depends on Mn(2+) as a cofactor.

The protein localises to the cytoplasm. It carries out the reaction 2-deoxy-alpha-D-ribose 1-phosphate = 2-deoxy-D-ribose 5-phosphate. The enzyme catalyses alpha-D-ribose 1-phosphate = D-ribose 5-phosphate. The protein operates within carbohydrate degradation; 2-deoxy-D-ribose 1-phosphate degradation; D-glyceraldehyde 3-phosphate and acetaldehyde from 2-deoxy-alpha-D-ribose 1-phosphate: step 1/2. In terms of biological role, isomerase that catalyzes the conversion of deoxy-ribose 1-phosphate (dRib-1-P) and ribose 1-phosphate (Rib-1-P) to deoxy-ribose 5-phosphate (dRib-5-P) and ribose 5-phosphate (Rib-5-P), respectively. The polypeptide is Phosphopentomutase (Helicobacter pylori (strain HPAG1)).